Here is a 401-residue protein sequence, read N- to C-terminus: Argininosuccinate synthase (401 aa).

ATP-binding positions include 10–18 (AYSGGVDTS) and A38. Y89 provides a ligand contact to L-citrulline. Residue G119 participates in ATP binding. Residues T121, N125, and D126 each contribute to the L-aspartate site. N125 is an L-citrulline binding site. Residues R129, S177, S186, E262, and Y274 each coordinate L-citrulline.

The protein belongs to the argininosuccinate synthase family. Type 1 subfamily. As to quaternary structure, homotetramer.

The protein resides in the cytoplasm. The catalysed reaction is L-citrulline + L-aspartate + ATP = 2-(N(omega)-L-arginino)succinate + AMP + diphosphate + H(+). Its pathway is amino-acid biosynthesis; L-arginine biosynthesis; L-arginine from L-ornithine and carbamoyl phosphate: step 2/3. This Prochlorococcus marinus (strain MIT 9313) protein is Argininosuccinate synthase.